The sequence spans 137 residues: Large-conductance mechanosensitive channel (137 aa).

2 consecutive transmembrane segments (helical) span residues 10–30 (FAMR…AAFG) and 76–96 (GVFL…FMAI).

The protein belongs to the MscL family. As to quaternary structure, homopentamer.

It localises to the cell inner membrane. Functionally, channel that opens in response to stretch forces in the membrane lipid bilayer. May participate in the regulation of osmotic pressure changes within the cell. This Erwinia tasmaniensis (strain DSM 17950 / CFBP 7177 / CIP 109463 / NCPPB 4357 / Et1/99) protein is Large-conductance mechanosensitive channel.